The following is a 363-amino-acid chain: Mannose-1-phosphate guanyltransferase (363 aa).

The protein belongs to the transferase hexapeptide repeat family.

It is found in the cytoplasm. It catalyses the reaction alpha-D-mannose 1-phosphate + GTP + H(+) = GDP-alpha-D-mannose + diphosphate. It participates in nucleotide-sugar biosynthesis; GDP-alpha-D-mannose biosynthesis; GDP-alpha-D-mannose from alpha-D-mannose 1-phosphate (GTP route): step 1/1. Involved in cell wall synthesis where it is required for glycosylation. Involved in cell cycle progression through cell-size checkpoint. This Yarrowia lipolytica (strain CLIB 122 / E 150) (Yeast) protein is Mannose-1-phosphate guanyltransferase (MPG1).